A 155-amino-acid polypeptide reads, in one-letter code: MSKVLEQVEAIVTPITDELQLELVDIAFEKEGPNWFLRIFIDKDGGVDIDECAAVSEKVSEKMDENDPITQNYFLEVSSPGAERPLKKEQDFENAVSKYVHVTSYEPIDGRKMWEGTLVSYDGTTLVITITDKTRKITCEIPKDKVAKARLAIQF.

Belongs to the RimP family.

It localises to the cytoplasm. Required for maturation of 30S ribosomal subunits. This is Ribosome maturation factor RimP from Listeria monocytogenes serotype 4b (strain CLIP80459).